Reading from the N-terminus, the 580-residue chain is MSDTWSSIQAHKKQLDSLRERLQRRRKQDSGHLDLRNPEAALSPTFRSDSPVPTAPTSGGPKPSTASAVPELATDPELEKKLLHHLSDLALTLPTDAVSICLAISTPDAPATQDGVESLLQKFAAQELIEVKRGLLQDDAHPTLVTYADHSKLSAMMGAVAEKKGPGEVAGTVTGQKRRAEQDSTTVAAFASSLVSGLNSSASEPAKEPAKKSRKHAASDVDLEIESLLNQQSTKEQQSKKVSQEILELLNTTTAKEQSIVEKFRSRGRAQVQEFCDYGTKEECMKASDADRPCRKLHFRRIINKHTDESLGDCSFLNTCFHMDTCKYVHYEIDACMDSEAPGSKDHTPSQELALTQSVGGDSSADRLFPPQWICCDIRYLDVSILGKFAVVMADPPWDIHMELPYGTLTDDEMRRLNIPVLQDDGFLFLWVTGRAMELGRECLNLWGYERVDEIIWVKTNQLQRIIRTGRTGHWLNHGKEHCLVGVKGNPQGFNQGLDCDVIVAEVRSTSHKPDEIYGMIERLSPGTRKIELFGRPHNVQPNWITLGNQLDGIHLLDPDVVARFKQRYPDGIISKPKNL.

The segment at 1-70 (MSDTWSSIQA…PKPSTASAVP (70 aa)) is disordered. An N-acetylserine; alternate modification is found at Ser-2. Ser-2 carries the post-translational modification Phosphoserine; alternate. The span at 28–37 (QDSGHLDLRN) shows a compositional bias: basic and acidic residues. Residues Ser-43, Ser-48, and Ser-50 each carry the phosphoserine modification. Glycyl lysine isopeptide (Lys-Gly) (interchain with G-Cter in SUMO1) cross-links involve residues Lys-177, Lys-211, Lys-212, and Lys-215. Positions 198–219 (LNSSASEPAKEPAKKSRKHAAS) are disordered. The short motif at 210–215 (AKKSRK) is the Nuclear localization signal element. Phosphoserine occurs at positions 219 and 243. At Thr-348 the chain carries Phosphothreonine. A Phosphoserine modification is found at Ser-350. S-adenosyl-L-methionine-binding positions include 377–378 (DI) and Asp-395. A gate loop 1 region spans residues 396-410 (PPWDIHMELPYGTLT). Interaction with METTL14 stretches follow at residues 450-454 (ERVDE) and 464-480 (QRIIRTGRTGHWLNHGK). The tract at residues 462 to 479 (QLQRIIRTGRTGHWLNHG) is interphase loop. A positively charged region required for RNA-binding region spans residues 465–478 (RIIRTGRTGHWLNH). Positions 507–515 (VRSTSHKPD) are gate loop 2. S-adenosyl-L-methionine-binding positions include Lys-513, 536-539 (RPHN), and 549-550 (NQ).

It belongs to the MT-A70-like family. As to quaternary structure, heterodimer; heterodimerizes with METTL14 to form an antiparallel heterodimer that constitutes an active methyltransferase. Component of the WMM complex, a N6-methyltransferase complex composed of a catalytic subcomplex, named MAC, and of an associated subcomplex, named MACOM. The MAC subcomplex is composed of METTL3 and METTL14. The MACOM subcomplex is composed of WTAP, ZC3H13, CBLL1/HAKAI, VIRMA, and, in some cases of RBM15 (RBM15 or RBM15B). Interacts with NCBP1/CBP80. Interacts with EIF4E. Interacts with EIF3B. Post-translationally, sumoylation inhibits the N6-adenosine-methyltransferase activity. Sumoylation does not affect subcellular location or interaction with METTL14. Desumoylated by SENP1. Widely expressed at low level. Expressed in spleen, thymus, prostate, testis, ovary, small intestine, colon and peripheral blood leukocytes.

It localises to the nucleus. The protein resides in the nucleus speckle. It is found in the cytoplasm. The enzyme catalyses an adenosine in mRNA + S-adenosyl-L-methionine = an N(6)-methyladenosine in mRNA + S-adenosyl-L-homocysteine + H(+). Its activity is regulated as follows. Methyltransferase activity is regulated by miRNAs via a sequence pairing mechanism. Methyltransferase activity is inhibited by sumoylation. Its function is as follows. The METTL3-METTL14 heterodimer forms a N6-methyltransferase complex that methylates adenosine residues at the N(6) position of some RNAs and regulates various processes such as the circadian clock, differentiation of embryonic and hematopoietic stem cells, cortical neurogenesis, response to DNA damage, differentiation of T-cells and primary miRNA processing. In the heterodimer formed with METTL14, METTL3 constitutes the catalytic core. N6-methyladenosine (m6A), which takes place at the 5'-[AG]GAC-3' consensus sites of some mRNAs, plays a role in mRNA stability, processing, translation efficiency and editing. M6A acts as a key regulator of mRNA stability: methylation is completed upon the release of mRNA into the nucleoplasm and promotes mRNA destabilization and degradation. In embryonic stem cells (ESCs), m6A methylation of mRNAs encoding key naive pluripotency-promoting transcripts results in transcript destabilization, promoting differentiation of ESCs. M6A regulates the length of the circadian clock: acts as an early pace-setter in the circadian loop by putting mRNA production on a fast-track for facilitating nuclear processing, thereby providing an early point of control in setting the dynamics of the feedback loop. M6A also regulates circadian regulation of hepatic lipid metabolism. M6A regulates spermatogonial differentiation and meiosis and is essential for male fertility and spermatogenesis. Also required for oogenesis. Involved in the response to DNA damage: in response to ultraviolet irradiation, METTL3 rapidly catalyzes the formation of m6A on poly(A) transcripts at DNA damage sites, leading to the recruitment of POLK to DNA damage sites. M6A is also required for T-cell homeostasis and differentiation: m6A methylation of transcripts of SOCS family members (SOCS1, SOCS3 and CISH) in naive T-cells promotes mRNA destabilization and degradation, promoting T-cell differentiation. Inhibits the type I interferon response by mediating m6A methylation of IFNB. M6A also takes place in other RNA molecules, such as primary miRNA (pri-miRNAs). Mediates m6A methylation of Xist RNA, thereby participating in random X inactivation: m6A methylation of Xist leads to target YTHDC1 reader on Xist and promote transcription repression activity of Xist. M6A also regulates cortical neurogenesis: m6A methylation of transcripts related to transcription factors, neural stem cells, the cell cycle and neuronal differentiation during brain development promotes their destabilization and decay, promoting differentiation of radial glial cells. METTL3 mediates methylation of pri-miRNAs, marking them for recognition and processing by DGCR8. Acts as a positive regulator of mRNA translation independently of the methyltransferase activity: promotes translation by interacting with the translation initiation machinery in the cytoplasm. Its overexpression in a number of cancer cells suggests that it may participate in cancer cell proliferation by promoting mRNA translation. During human coronavirus SARS-CoV-2 infection, adds m6A modifications in SARS-CoV-2 RNA leading to decreased RIGI binding and subsequently dampening the sensing and activation of innate immune responses. This is N(6)-adenosine-methyltransferase catalytic subunit METTL3 from Homo sapiens (Human).